A 195-amino-acid polypeptide reads, in one-letter code: Putative Tricorn-like protease N-terminal subunit (195 aa).

It belongs to the peptidase S41B family.

It localises to the cytoplasm. Functionally, degrades oligopeptides in a sequential manner. This chain is Putative Tricorn-like protease N-terminal subunit (triN), found in Sulfurisphaera tokodaii (strain DSM 16993 / JCM 10545 / NBRC 100140 / 7) (Sulfolobus tokodaii).